A 447-amino-acid polypeptide reads, in one-letter code: GTPase Der (447 aa).

EngA-type G domains lie at 4–165 (QIIT…PEEE) and 180–357 (LQIV…KIWN). GTP-binding positions include 10 to 17 (GRPNVGKS), 57 to 61 (DTPGL), 119 to 122 (NKCE), 186 to 193 (GRPNAGKS), 233 to 237 (DTAGL), and 298 to 301 (NKWD). Residues 358 to 443 (KKITTSKLNE…PIRFIYVKTK (86 aa)) form the KH-like domain.

It belongs to the TRAFAC class TrmE-Era-EngA-EngB-Septin-like GTPase superfamily. EngA (Der) GTPase family. Associates with the 50S ribosomal subunit.

In terms of biological role, GTPase that plays an essential role in the late steps of ribosome biogenesis. The protein is GTPase Der of Rickettsia conorii (strain ATCC VR-613 / Malish 7).